The chain runs to 395 residues: Membrane glycoprotein spo14 (395 aa).

At 1–346 (MAELHLSFPA…KLEDAGVILR (346 aa)) the chain is on the cytoplasmic side. WD repeat units lie at residues 250–285 (MIRDLKNAKGVTCFCCDKENGMIIVAGADCSIRFMS) and 290–326 (KLSQVYKHSLPVTDMQLSPDSEALVSVSADGLLCLQF). Residues 347–367 (LSLMFPFVLAILYFYLQLLFP) form a helical; Signal-anchor for type II membrane protein membrane-spanning segment. The Lumenal segment spans residues 368–395 (DEKLDAIHRFFSFILHIFSKYTIRNYDL).

Its subcellular location is the endoplasmic reticulum membrane. The protein resides in the golgi apparatus. The protein localises to the cis-Golgi network membrane. Required for the formation of transport vesicles from the ER. This function involves the cytoplasmic domain of the protein, which is thought to interact with the small GTP-binding protein sar1. This is Membrane glycoprotein spo14 (spo14) from Schizosaccharomyces pombe (strain 972 / ATCC 24843) (Fission yeast).